A 137-amino-acid polypeptide reads, in one-letter code: Large ribosomal subunit protein uL24 (137 aa).

This sequence belongs to the universal ribosomal protein uL24 family. As to quaternary structure, part of the 50S ribosomal subunit.

Its function is as follows. One of two assembly initiator proteins, it binds directly to the 5'-end of the 23S rRNA, where it nucleates assembly of the 50S subunit. Functionally, located at the polypeptide exit tunnel on the outside of the subunit. The polypeptide is Large ribosomal subunit protein uL24 (Sulfurisphaera tokodaii (strain DSM 16993 / JCM 10545 / NBRC 100140 / 7) (Sulfolobus tokodaii)).